A 397-amino-acid polypeptide reads, in one-letter code: Probable inactive purple acid phosphatase 28 (397 aa).

The signal sequence occupies residues 1–30; sequence MNCSIGNWKHTVLYLTLIVSLLYFIESLIS. N-linked (GlcNAc...) asparagine glycans are attached at residues N91 and N209. Zn(2+)-binding residues include H266 and H314. 314-316 is a binding site for substrate; the sequence is HDH. A Fe cation-binding site is contributed by H316.

Belongs to the metallophosphoesterase superfamily. Purple acid phosphatase family. Homodimer. Fe cation serves as cofactor. It depends on Zn(2+) as a cofactor. Expressed in roots, stems, leaves, flowers and siliques.

The protein resides in the secreted. The sequence is that of Probable inactive purple acid phosphatase 28 (PAP28) from Arabidopsis thaliana (Mouse-ear cress).